Reading from the N-terminus, the 215-residue chain is Pyrophosphatase PpaX (215 aa).

The Nucleophile role is filled by aspartate 9.

This sequence belongs to the HAD-like hydrolase superfamily. PpaX family. It depends on Mg(2+) as a cofactor.

The catalysed reaction is diphosphate + H2O = 2 phosphate + H(+). Its function is as follows. Hydrolyzes pyrophosphate formed during P-Ser-HPr dephosphorylation by HPrK/P. Might play a role in controlling the intracellular pyrophosphate pool. The chain is Pyrophosphatase PpaX from Halalkalibacterium halodurans (strain ATCC BAA-125 / DSM 18197 / FERM 7344 / JCM 9153 / C-125) (Bacillus halodurans).